A 340-amino-acid chain; its full sequence is uncharacterized protein (340 aa).

Residues 284-340 form a disordered region; sequence DHSTPTNYQQETPASQQQLDQENEPIKPSKKSNSSSLPRGTTQPKSNSINRVSKLID. Composition is skewed to polar residues over residues 286–303 and 320–334; these read STPT…QQLD and LPRG…SINR.

This is an uncharacterized protein from Mycoplasma genitalium (strain ATCC 33530 / DSM 19775 / NCTC 10195 / G37) (Mycoplasmoides genitalium).